Reading from the N-terminus, the 123-residue chain is MPACRLGLLVASLLLGLLLGLPPVTGTGAEKSGVCPAVEVDMNCTQECLSDADCADNLKCCKAGCVTICQMPNEKEGSCPQVDIAFPQLGLCLDQCQVDSQCPGQLKCCRNGCGKVSCVTPVF.

The signal sequence occupies residues 1-26 (MPACRLGLLVASLLLGLLLGLPPVTG). 2 consecutive WAP domains span residues 28–69 (GAEK…VTIC) and 72–122 (PNEK…VTPV). Intrachain disulfides connect Cys35-Cys61, Cys44-Cys65, Cys48-Cys60, Cys54-Cys69, Cys79-Cys109, Cys92-Cys113, Cys96-Cys108, and Cys102-Cys118.

In terms of assembly, homotrimer; disulfide-linked. As to expression, detected in the distal parts of the epididymis.

The protein resides in the secreted. Its function is as follows. Broad range protease inhibitor. This is WAP four-disulfide core domain protein 2 (WFDC2) from Sus scrofa (Pig).